A 106-amino-acid chain; its full sequence is Cell division protein FtsB (106 aa).

Topologically, residues 1–3 are cytoplasmic; it reads MRL. A helical transmembrane segment spans residues 4–21; sequence LTLIFVALIALLQYPLWL. Over 22–106 the chain is Periplasmic; the sequence is GKGSWLRVWD…SPPAALTGAQ (85 aa). A coiled-coil region spans residues 31 to 73; that stretch reads DLNQKIVAQKAVNAELKLRNDTLDAEVRDLKQGNAAIEERARS.

It belongs to the FtsB family. As to quaternary structure, part of a complex composed of FtsB, FtsL and FtsQ.

It is found in the cell inner membrane. Essential cell division protein. May link together the upstream cell division proteins, which are predominantly cytoplasmic, with the downstream cell division proteins, which are predominantly periplasmic. The sequence is that of Cell division protein FtsB from Methylobacillus flagellatus (strain ATCC 51484 / DSM 6875 / VKM B-1610 / KT).